Reading from the N-terminus, the 436-residue chain is Enolase (436 aa).

Q163 is a (2R)-2-phosphoglycerate binding site. The active-site Proton donor is E205. Mg(2+) is bound by residues D242, E285, and D312. 4 residues coordinate (2R)-2-phosphoglycerate: K337, R366, S367, and K388. The Proton acceptor role is filled by K337.

The protein belongs to the enolase family. Mg(2+) serves as cofactor.

It is found in the cytoplasm. Its subcellular location is the secreted. The protein localises to the cell surface. It carries out the reaction (2R)-2-phosphoglycerate = phosphoenolpyruvate + H2O. The protein operates within carbohydrate degradation; glycolysis; pyruvate from D-glyceraldehyde 3-phosphate: step 4/5. Catalyzes the reversible conversion of 2-phosphoglycerate (2-PG) into phosphoenolpyruvate (PEP). It is essential for the degradation of carbohydrates via glycolysis. In Solidesulfovibrio magneticus (strain ATCC 700980 / DSM 13731 / RS-1) (Desulfovibrio magneticus), this protein is Enolase.